The following is a 305-amino-acid chain: Outer membrane protein assembly factor BamD (305 aa).

The N-terminal stretch at 1 to 24 (MLRIFQGRPAVTIAAVLVAASVAG) is a signal peptide. Residue Cys25 is the site of N-palmitoyl cysteine attachment. Residue Cys25 is the site of S-diacylglycerol cysteine attachment. TPR repeat units follow at residues 41-74 (VELL…HPYS), 78-111 (RRSI…YPGN), 113-136 (SAQY…NRDQ), and 174-207 (AGKE…HQTT).

The protein belongs to the BamD family. In terms of assembly, part of the Bam complex.

The protein resides in the cell outer membrane. Functionally, part of the outer membrane protein assembly complex, which is involved in assembly and insertion of beta-barrel proteins into the outer membrane. The sequence is that of Outer membrane protein assembly factor BamD from Caulobacter vibrioides (strain ATCC 19089 / CIP 103742 / CB 15) (Caulobacter crescentus).